The sequence spans 292 residues: 4-hydroxy-tetrahydrodipicolinate synthase (292 aa).

Position 45 (T45) interacts with pyruvate. Y133 acts as the Proton donor/acceptor in catalysis. K161 acts as the Schiff-base intermediate with substrate in catalysis. Residue I203 coordinates pyruvate.

The protein belongs to the DapA family. In terms of assembly, homotetramer; dimer of dimers.

Its subcellular location is the cytoplasm. The enzyme catalyses L-aspartate 4-semialdehyde + pyruvate = (2S,4S)-4-hydroxy-2,3,4,5-tetrahydrodipicolinate + H2O + H(+). Its pathway is amino-acid biosynthesis; L-lysine biosynthesis via DAP pathway; (S)-tetrahydrodipicolinate from L-aspartate: step 3/4. In terms of biological role, catalyzes the condensation of (S)-aspartate-beta-semialdehyde [(S)-ASA] and pyruvate to 4-hydroxy-tetrahydrodipicolinate (HTPA). The protein is 4-hydroxy-tetrahydrodipicolinate synthase of Klebsiella pneumoniae subsp. pneumoniae (strain ATCC 700721 / MGH 78578).